Reading from the N-terminus, the 221-residue chain is Probable septum site-determining protein MinC (221 aa).

This sequence belongs to the MinC family. As to quaternary structure, interacts with MinD and FtsZ.

Cell division inhibitor that blocks the formation of polar Z ring septums. Rapidly oscillates between the poles of the cell to destabilize FtsZ filaments that have formed before they mature into polar Z rings. Prevents FtsZ polymerization. The polypeptide is Probable septum site-determining protein MinC (Prochlorococcus marinus (strain SARG / CCMP1375 / SS120)).